Here is a 280-residue protein sequence, read N- to C-terminus: uncharacterized protein (280 aa).

The N-terminal 51 residues, 1–51, are a transit peptide targeting the chloroplast; it reads MATSLLLRHSSAVFFSQSSFFTKNKSFRSFTSIKMEKGEAENAVKTKKVFV.

This sequence belongs to the NAD(P)-dependent epimerase/dehydratase family.

Its subcellular location is the plastid. The protein localises to the chloroplast. It localises to the plastoglobule. This is an uncharacterized protein from Arabidopsis thaliana (Mouse-ear cress).